The chain runs to 420 residues: Histidine--tRNA ligase (420 aa).

The protein belongs to the class-II aminoacyl-tRNA synthetase family. In terms of assembly, homodimer.

It localises to the cytoplasm. The catalysed reaction is tRNA(His) + L-histidine + ATP = L-histidyl-tRNA(His) + AMP + diphosphate + H(+). The chain is Histidine--tRNA ligase from Thermotoga petrophila (strain ATCC BAA-488 / DSM 13995 / JCM 10881 / RKU-1).